The primary structure comprises 181 residues: ATP synthase subunit b (181 aa).

The chain crosses the membrane as a helical span at residues 24–44; it reads LFPNLPNFIAHLLATIILVIV.

The protein belongs to the ATPase B chain family. As to quaternary structure, F-type ATPases have 2 components, F(1) - the catalytic core - and F(0) - the membrane proton channel. F(1) has five subunits: alpha(3), beta(3), gamma(1), delta(1), epsilon(1). F(0) has three main subunits: a(1), b(2) and c(10-14). The alpha and beta chains form an alternating ring which encloses part of the gamma chain. F(1) is attached to F(0) by a central stalk formed by the gamma and epsilon chains, while a peripheral stalk is formed by the delta and b chains.

The protein localises to the cell membrane. In terms of biological role, f(1)F(0) ATP synthase produces ATP from ADP in the presence of a proton or sodium gradient. F-type ATPases consist of two structural domains, F(1) containing the extramembraneous catalytic core and F(0) containing the membrane proton channel, linked together by a central stalk and a peripheral stalk. During catalysis, ATP synthesis in the catalytic domain of F(1) is coupled via a rotary mechanism of the central stalk subunits to proton translocation. Component of the F(0) channel, it forms part of the peripheral stalk, linking F(1) to F(0). In Mycoplasma mycoides subsp. mycoides SC (strain CCUG 32753 / NCTC 10114 / PG1), this protein is ATP synthase subunit b.